Consider the following 37-residue polypeptide: Large ribosomal subunit protein bL36c (37 aa).

This sequence belongs to the bacterial ribosomal protein bL36 family.

It localises to the plastid. It is found in the chloroplast. This is Large ribosomal subunit protein bL36c (rpl36) from Anthoceros angustus (Hornwort).